The sequence spans 511 residues: Mannosyl-oligosaccharide alpha-1,2-mannosidase (511 aa).

The signal sequence occupies residues Met1 to Lys35. N-linked (GlcNAc...) asparagine glycosylation occurs at Asn182. Cys332 and Cys361 are disulfide-bonded. Asn366 carries N-linked (GlcNAc...) asparagine glycosylation. The active-site Proton donor is Asp375. An N-linked (GlcNAc...) asparagine glycan is attached at Asn438. Thr501 is a Ca(2+) binding site.

Belongs to the glycosyl hydrolase 47 family. Homodimer. Ca(2+) serves as cofactor.

The protein localises to the secreted. It carries out the reaction N(4)-(alpha-D-Man-(1-&gt;2)-alpha-D-Man-(1-&gt;2)-alpha-D-Man-(1-&gt;3)-[alpha-D-Man-(1-&gt;2)-alpha-D-Man-(1-&gt;3)-[alpha-D-Man-(1-&gt;2)-alpha-D-Man-(1-&gt;6)]-alpha-D-Man-(1-&gt;6)]-beta-D-Man-(1-&gt;4)-beta-D-GlcNAc-(1-&gt;4)-beta-D-GlcNAc)-L-asparaginyl-[protein] (N-glucan mannose isomer 9A1,2,3B1,2,3) + 4 H2O = N(4)-(alpha-D-Man-(1-&gt;3)-[alpha-D-Man-(1-&gt;3)-[alpha-D-Man-(1-&gt;6)]-alpha-D-Man-(1-&gt;6)]-beta-D-Man-(1-&gt;4)-beta-D-GlcNAc-(1-&gt;4)-beta-D-GlcNAc)-L-asparaginyl-[protein] (N-glucan mannose isomer 5A1,2) + 4 beta-D-mannose. The enzyme catalyses N(4)-(alpha-D-Man-(1-&gt;2)-alpha-D-Man-(1-&gt;2)-alpha-D-Man-(1-&gt;3)-[alpha-D-Man-(1-&gt;3)-[alpha-D-Man-(1-&gt;2)-alpha-D-Man-(1-&gt;6)]-alpha-D-Man-(1-&gt;6)]-beta-D-Man-(1-&gt;4)-beta-D-GlcNAc-(1-&gt;4)-beta-D-GlcNAc)-L-asparaginyl-[protein] (N-glucan mannose isomer 8A1,2,3B1,3) + 3 H2O = N(4)-(alpha-D-Man-(1-&gt;3)-[alpha-D-Man-(1-&gt;3)-[alpha-D-Man-(1-&gt;6)]-alpha-D-Man-(1-&gt;6)]-beta-D-Man-(1-&gt;4)-beta-D-GlcNAc-(1-&gt;4)-beta-D-GlcNAc)-L-asparaginyl-[protein] (N-glucan mannose isomer 5A1,2) + 3 beta-D-mannose. It participates in protein modification; protein glycosylation. In terms of biological role, involved in the maturation of Asn-linked oligosaccharides. Progressively trim alpha-1,2-linked mannose residues from Man(9)GlcNAc(2) to produce Man(5)GlcNAc(2). The sequence is that of Mannosyl-oligosaccharide alpha-1,2-mannosidase (MSDC) from Penicillium citrinum.